The chain runs to 416 residues: Enolase (416 aa).

Residue glutamine 160 coordinates (2R)-2-phosphoglycerate. Glutamate 204 functions as the Proton donor in the catalytic mechanism. Mg(2+) contacts are provided by aspartate 239, glutamate 282, and aspartate 308. 4 residues coordinate (2R)-2-phosphoglycerate: lysine 333, arginine 362, serine 363, and lysine 384. Lysine 333 functions as the Proton acceptor in the catalytic mechanism.

This sequence belongs to the enolase family. Requires Mg(2+) as cofactor.

It is found in the cytoplasm. The protein resides in the secreted. It localises to the cell surface. The catalysed reaction is (2R)-2-phosphoglycerate = phosphoenolpyruvate + H2O. It functions in the pathway carbohydrate degradation; glycolysis; pyruvate from D-glyceraldehyde 3-phosphate: step 4/5. Its function is as follows. Catalyzes the reversible conversion of 2-phosphoglycerate (2-PG) into phosphoenolpyruvate (PEP). It is essential for the degradation of carbohydrates via glycolysis. The chain is Enolase from Metallosphaera sedula (strain ATCC 51363 / DSM 5348 / JCM 9185 / NBRC 15509 / TH2).